The primary structure comprises 1056 residues: RNA cytidine acetyltransferase (1056 aa).

286 to 295 (GRGKSAALGI) is an ATP binding site. Over residues 433 to 446 (QNNTSGRESTQTAV) the composition is skewed to polar residues. A disordered region spans residues 433–463 (QNNTSGRESTQTAVVSRDNKEKDSHLHSQSR). Residues 449–463 (RDNKEKDSHLHSQSR) show a composition bias toward basic and acidic residues. R475 provides a ligand contact to ATP. In terms of domain architecture, N-acetyltransferase spans 566–706 (VLLPPIDPKD…VKLRDAKTLP (141 aa)). Acetyl-CoA-binding positions include 638–640 (IAT), 645–651 (ASMGYGS), and N739. A phosphoserine mark is found at S1001, S1007, and S1010.

It belongs to the RNA cytidine acetyltransferase family. NAT10 subfamily. As to quaternary structure, interacts with TAN1. Associates with 90S pre-ribosomal particles.

The protein resides in the nucleus. Its subcellular location is the nucleolus. The enzyme catalyses a cytidine in 18S rRNA + acetyl-CoA + ATP + H2O = an N(4)-acetylcytidine in 18S rRNA + ADP + phosphate + CoA + H(+). It catalyses the reaction a cytidine in tRNA + acetyl-CoA + ATP + H2O = an N(4)-acetylcytidine in tRNA + ADP + phosphate + CoA + H(+). RNA cytidine acetyltransferase with specificity toward both 18S rRNA and tRNAs. Catalyzes the formation of N(4)-acetylcytidine (ac4C) at positions 1280 and 1773 in 18S rRNA. Required for early nucleolar cleavages of precursor rRNA at sites A0, A1 and A2 during 18S rRNA synthesis. Catalyzes the formation of ac4C at position 12 in serine and leucine tRNAs. Requires the tRNA-binding adapter protein TAN1 for full tRNA acetyltransferase activity but not for 18S rRNA acetylation. The chain is RNA cytidine acetyltransferase from Saccharomyces cerevisiae (strain ATCC 204508 / S288c) (Baker's yeast).